Here is a 170-residue protein sequence, read N- to C-terminus: MREIRISKLVLNIAVAESGDRLQKAAKVLEQLTSQVPVYGRARFTVRSFAIRRNEKISCYVTVRGEKAYDLVKRGLAVKEFELIRKNFSDTGNFGFGIQEHIDLGLKYDPSTGIYGMDFYVCLERRGYRVARRRKQKAHVGVKHKVTKEDAIKWFQQEFDGVVLNKAPAS.

It belongs to the universal ribosomal protein uL5 family. As to quaternary structure, component of the large ribosomal subunit.

It localises to the nucleus. Its subcellular location is the cytoplasm. In terms of biological role, component of the ribosome, a large ribonucleoprotein complex responsible for the synthesis of proteins in the cell. The small ribosomal subunit (SSU) binds messenger RNAs (mRNAs) and translates the encoded message by selecting cognate aminoacyl-transfer RNA (tRNA) molecules. The large subunit (LSU) contains the ribosomal catalytic site termed the peptidyl transferase center (PTC), which catalyzes the formation of peptide bonds, thereby polymerizing the amino acids delivered by tRNAs into a polypeptide chain. The nascent polypeptides leave the ribosome through a tunnel in the LSU and interact with protein factors that function in enzymatic processing, targeting, and the membrane insertion of nascent chains at the exit of the ribosomal tunnel. This is Large ribosomal subunit protein uL5 (RPL11) from Chlamydomonas reinhardtii (Chlamydomonas smithii).